The sequence spans 663 residues: Endopolyphosphatase (663 aa).

Topologically, residues 1 to 14 are cytoplasmic; it reads MAVNEKDVGRKSRV. The helical; Signal-anchor for type II membrane protein transmembrane segment at 15–35 threads the bilayer; that stretch reads SVVLWVFIALGTLFLCKNAFT. Over 36–663 the chain is Vacuolar; sequence FSSESIHGLK…ISTGYEDERN (628 aa). N-linked (GlcNAc...) asparagine glycans are attached at residues Asn-487 and Asn-526. The segment at 534–564 is disordered; it reads SAEQNKKKKKKNGKPDKSIPRKKPDELPAGP. The span at 546-559 shows a compositional bias: basic and acidic residues; sequence GKPDKSIPRKKPDE.

This sequence belongs to the endopolyphosphatase PPN1 family. The cofactor is a divalent metal cation. Processing by proteases in the vacuole may be required for activation.

It is found in the vacuole membrane. It catalyses the reaction [phosphate](n+1) + n H2O = (n+1) phosphate + n H(+). In terms of biological role, catalyzes the hydrolysis of inorganic polyphosphate (polyP) chains of many hundreds of phosphate residues into shorter lengths. The chain is Endopolyphosphatase (PPN1) from Candida glabrata (strain ATCC 2001 / BCRC 20586 / JCM 3761 / NBRC 0622 / NRRL Y-65 / CBS 138) (Yeast).